We begin with the raw amino-acid sequence, 110 residues long: Large ribosomal subunit protein uL22 (110 aa).

The protein belongs to the universal ribosomal protein uL22 family. In terms of assembly, part of the 50S ribosomal subunit.

Its function is as follows. This protein binds specifically to 23S rRNA; its binding is stimulated by other ribosomal proteins, e.g. L4, L17, and L20. It is important during the early stages of 50S assembly. It makes multiple contacts with different domains of the 23S rRNA in the assembled 50S subunit and ribosome. The globular domain of the protein is located near the polypeptide exit tunnel on the outside of the subunit, while an extended beta-hairpin is found that lines the wall of the exit tunnel in the center of the 70S ribosome. This Ruthia magnifica subsp. Calyptogena magnifica protein is Large ribosomal subunit protein uL22.